The chain runs to 119 residues: uncharacterized protein (119 aa).

The protein to T.pallidum TP_0127, TP_0315 and TP_0619.

This is an uncharacterized protein from Treponema pallidum (strain Nichols).